The chain runs to 687 residues: Chloride channel protein ClC-Ka (687 aa).

The next 4 helical transmembrane spans lie at 52–72, 161–181, 202–222, and 236–256; these read FLMT…FALG, LFLG…AYLG, VAGA…GVLF, and YWRG…LAVF. E259, E261, D278, and E281 together coordinate Ca(2+). A run of 6 helical transmembrane segments spans residues 282 to 302, 325 to 345, 396 to 416, 417 to 437, 452 to 472, and 486 to 506; these read IFFF…YLYC, PLYA…PGVG, FTIF…LILA, TTIP…AAIG, IVAG…AGAA, and LLAF…MAVL. Over 507–687 the chain is Cytoplasmic; it reads AANAIAQSCQ…SALTNPPPAK (181 aa). CBS domains lie at 551-612 and 628-686; these read MRRA…ARAS and TEPV…PPPA.

The protein belongs to the chloride channel (TC 2.A.49) family. CLCNKA subfamily. In terms of assembly, homodimer. Interacts with BSND. Expressed predominantly in the kidney.

It is found in the basolateral cell membrane. It catalyses the reaction chloride(in) = chloride(out). The catalysed reaction is bromide(in) = bromide(out). It carries out the reaction nitrate(in) = nitrate(out). The enzyme catalyses iodide(out) = iodide(in). Functionally, anion-selective channel permeable to small monovalent anions with ion selectivity for chloride &gt; bromide &gt; nitrate &gt; iodide. Forms a homodimeric channel where each subunit has its own ion conduction pathway. May conduct double-barreled currents controlled by two types of gates, two fast gates that control each subunit independently and a slow common gate that opens and shuts off both subunits simultaneously. Assembles with the regulatory subunit BSND/Barttin for sorting at the basolateral plasma membrane domain and functional switch to the ion conducting state. CLCNKA:BSND channels display mostly a linear current-voltage relationship with fast gating at negative potentials. Mediates transepithelial chloride transport from the lumen to interstitial compartment along the thin ascending limb of Henle's loop, contributing to generation of hypertonic medullary interstitium as a countercurrent system to achieve urine concentration. Conducts chloride currents in the stria vascularis of the inner ear to establish the endocochlear potential necessary for normal hearing. This is Chloride channel protein ClC-Ka (CLCNKA) from Oryctolagus cuniculus (Rabbit).